The primary structure comprises 66 residues: Beta-toxin Css6 (66 aa).

The LCN-type CS-alpha/beta domain maps to 1 to 66; sequence KEGYLVNSYT…VWPLPNKTCN (66 aa). 4 disulfides stabilise this stretch: cysteine 12/cysteine 65, cysteine 16/cysteine 41, cysteine 25/cysteine 46, and cysteine 29/cysteine 48. Asparagine 66 carries the asparagine amide modification.

It belongs to the long (4 C-C) scorpion toxin superfamily. Sodium channel inhibitor family. Beta subfamily. Expressed by the venom gland.

The protein resides in the secreted. Its function is as follows. Beta toxins bind voltage-independently at site-4 of sodium channels (Nav) and shift the voltage of activation toward more negative potentials thereby affecting sodium channel activation and promoting spontaneous and repetitive firing. The protein is Beta-toxin Css6 of Centruroides suffusus (Durango bark scorpion).